We begin with the raw amino-acid sequence, 599 residues long: Aspartate--tRNA(Asp/Asn) ligase (599 aa).

An L-aspartate-binding site is contributed by Glu173. Residues 197-200 are aspartate; the sequence is QLYK. Arg219 is a binding site for L-aspartate. ATP-binding positions include 219–221 and Gln228; that span reads RDE. His451 is a binding site for L-aspartate. Residue Glu484 coordinates ATP. Residue Arg491 coordinates L-aspartate. Position 536-539 (536-539) interacts with ATP; that stretch reads GLDR.

It belongs to the class-II aminoacyl-tRNA synthetase family. Type 1 subfamily. As to quaternary structure, homodimer.

It is found in the cytoplasm. The enzyme catalyses tRNA(Asx) + L-aspartate + ATP = L-aspartyl-tRNA(Asx) + AMP + diphosphate. Its function is as follows. Aspartyl-tRNA synthetase with relaxed tRNA specificity since it is able to aspartylate not only its cognate tRNA(Asp) but also tRNA(Asn). Reaction proceeds in two steps: L-aspartate is first activated by ATP to form Asp-AMP and then transferred to the acceptor end of tRNA(Asp/Asn). In Methylococcus capsulatus (strain ATCC 33009 / NCIMB 11132 / Bath), this protein is Aspartate--tRNA(Asp/Asn) ligase.